The chain runs to 65 residues: U2-theraphotoxin-Pc1a (65 aa).

The signal sequence occupies residues methionine 1–alanine 20. The propeptide occupies glutamate 21–glutamate 36. 3 cysteine pairs are disulfide-bonded: cysteine 39-cysteine 56, cysteine 46-cysteine 59, and cysteine 55-cysteine 64.

This sequence belongs to the neurotoxin 36 family. 02 subfamily. In terms of tissue distribution, expressed by the venom gland.

Its subcellular location is the secreted. Functionally, possesses strong antiplasmodial activity against the intra-erythrocyte stage of P.falciparum in vitro. IC(50) for inhibiting P.falciparum growth is 1.15 uM. Specifically interacts with infected erythrocytes. Does not lyse erythrocytes, is not cytotoxic to nucleated mammalian cells, and does not inhibit neuromuscular function. Has neither antibacterial nor antifungal activity. In Psalmopoeus cambridgei (Trinidad chevron tarantula), this protein is U2-theraphotoxin-Pc1a.